The primary structure comprises 808 residues: Probable inorganic carbon transporter subunit DabA (808 aa).

Residues cysteine 334, aspartate 336, histidine 494, and cysteine 509 each coordinate Zn(2+).

It belongs to the inorganic carbon transporter (TC 9.A.2) DabA family. In terms of assembly, forms a complex with DabB. Zn(2+) is required as a cofactor.

The protein localises to the cell inner membrane. Functionally, part of an energy-coupled inorganic carbon pump. This is Probable inorganic carbon transporter subunit DabA from Rhodopseudomonas palustris (strain BisB5).